Here is a 715-residue protein sequence, read N- to C-terminus: Probable GTP diphosphokinase RSH3, chloroplastic (715 aa).

The transit peptide at 1-64 (MVVATTIALY…LLFSGASVKS (64 aa)) directs the protein to the chloroplast. Residues 65–74 (SSSSSSSHPS) show a composition bias toward low complexity. The disordered stretch occupies residues 65 to 84 (SSSSSSSHPSVGEELASIRH). In terms of domain architecture, HD spans 237 to 341 (YLQHCVETAM…IKLADRLHNM (105 aa)).

It belongs to the RelA/SpoT family. In terms of tissue distribution, expressed in roots, hypocotyls, shoots, cotyledons, rosette and cauline leaves, stems, petals, sepals, stamens, pistils and siliques.

It localises to the plastid. The protein localises to the chloroplast. It carries out the reaction GTP + ATP = guanosine 3'-diphosphate 5'-triphosphate + AMP. Possesses ppGpp (guanosine 3'-diphosphate 5'-diphosphate) synthetase activity in vitro and is able to functionally complement E.coli relA mutants. May be involved in a rapid plant ppGpp-mediated response to pathogens and other stresses. The chain is Probable GTP diphosphokinase RSH3, chloroplastic (RSH3) from Arabidopsis thaliana (Mouse-ear cress).